Reading from the N-terminus, the 279-residue chain is Small ribosomal subunit protein uS2 (279 aa).

A disordered region spans residues 232–260 (KVDMEAAGENAPKGAGKKKNTKARMDKAE).

This sequence belongs to the universal ribosomal protein uS2 family.

The chain is Small ribosomal subunit protein uS2 from Phocaeicola vulgatus (strain ATCC 8482 / DSM 1447 / JCM 5826 / CCUG 4940 / NBRC 14291 / NCTC 11154) (Bacteroides vulgatus).